The following is a 148-amino-acid chain: Large ribosomal subunit protein bL9 (148 aa).

The protein belongs to the bacterial ribosomal protein bL9 family.

Functionally, binds to the 23S rRNA. This is Large ribosomal subunit protein bL9 from Pseudomonas aeruginosa (strain LESB58).